The following is a 133-amino-acid chain: Large ribosomal subunit protein uL11 (133 aa).

The protein belongs to the universal ribosomal protein uL11 family. As to quaternary structure, part of the ribosomal stalk of the 50S ribosomal subunit. Interacts with L10 and the large rRNA to form the base of the stalk. L10 forms an elongated spine to which 2 L12 dimers bind in a sequential fashion forming a pentameric L10(L12)2(L12)2 complex. In terms of processing, one or more lysine residues are methylated.

Forms part of the ribosomal stalk which helps the ribosome interact with GTP-bound translation factors. This chain is Large ribosomal subunit protein uL11, found in Geobacillus stearothermophilus (Bacillus stearothermophilus).